A 90-amino-acid chain; its full sequence is UPF0298 protein SSU98_1559 (90 aa).

It belongs to the UPF0298 family.

The protein resides in the cytoplasm. The sequence is that of UPF0298 protein SSU98_1559 from Streptococcus suis (strain 98HAH33).